The sequence spans 87 residues: Small ribosomal subunit protein uS15 (87 aa).

It belongs to the universal ribosomal protein uS15 family. As to quaternary structure, part of the 30S ribosomal subunit. Forms a bridge to the 50S subunit in the 70S ribosome, contacting the 23S rRNA.

Its function is as follows. One of the primary rRNA binding proteins, it binds directly to 16S rRNA where it helps nucleate assembly of the platform of the 30S subunit by binding and bridging several RNA helices of the 16S rRNA. Functionally, forms an intersubunit bridge (bridge B4) with the 23S rRNA of the 50S subunit in the ribosome. The chain is Small ribosomal subunit protein uS15 from Acetivibrio thermocellus (strain ATCC 27405 / DSM 1237 / JCM 9322 / NBRC 103400 / NCIMB 10682 / NRRL B-4536 / VPI 7372) (Clostridium thermocellum).